The sequence spans 281 residues: Glycerol uptake facilitator protein (281 aa).

Topologically, residues 1 to 5 (MSQTS) are cytoplasmic. The chain crosses the membrane as a helical span at residues 6–34 (TLKGQCIAEFLGTGLLIFFGVGCVAALKV). At 35–39 (AGASF) the chain is on the periplasmic side. Residues 40 to 60 (GQWEISVIWGLGVAMAIYLTA) traverse the membrane as a helical segment. Topologically, residues 61–63 (GVS) are cytoplasmic. The stretch at 64 to 67 (GAHL) is an intramembrane region. An NPA 1 motif is present at residues 68–70 (NPA). Residues 68–78 (NPAVTIALWLF) constitute an intramembrane region (helical). Over 79-84 (ACFDKR) the chain is Cytoplasmic. A helical transmembrane segment spans residues 85 to 108 (KVIPFIVSQVAGAFCAAALVYGLY). Residues 109–143 (YNLFFDFEQTHHIVRGSVESVDLAGTFSTYPNPHI) are Periplasmic-facing. A helical membrane pass occupies residues 144–169 (NFVQAFAVEMVITAILMGLILALTDD). The Cytoplasmic portion of the chain corresponds to 170–177 (GNGVPRGP). The chain crosses the membrane as a helical span at residues 178–194 (LAPLLIGLLIAVIGASM). Topologically, residues 195–198 (GPLT) are periplasmic. Residues 199–202 (GFAM) lie within the membrane without spanning it. The NPA 2 signature appears at 203–205 (NPA). The segment at residues 203–216 (NPARDFGPKVFAWL) is an intramembrane region (helical). At 217–231 (AGWGNVAFTGGRDIP) the chain is on the periplasmic side. The chain crosses the membrane as a helical span at residues 232 to 254 (YFLVPLFSPIVGAIVGAFAYRKL). The Cytoplasmic portion of the chain corresponds to 255 to 281 (IGRHLPCDICVVEEKETTTPSEQKASL).

It belongs to the MIP/aquaporin (TC 1.A.8) family. In terms of assembly, homotetramer.

The protein resides in the cell inner membrane. The enzyme catalyses glycerol(in) = glycerol(out). In terms of biological role, mediates glycerol diffusion across the cytoplasmic membrane via a pore-type mechanism. This is Glycerol uptake facilitator protein (glpF) from Shigella flexneri.